We begin with the raw amino-acid sequence, 503 residues long: Glutamyl-tRNA(Gln) amidotransferase subunit A (503 aa).

Active-site charge relay system residues include lysine 79 and serine 154. Catalysis depends on serine 178, which acts as the Acyl-ester intermediate.

The protein belongs to the amidase family. GatA subfamily. In terms of assembly, heterotrimer of A, B and C subunits.

The enzyme catalyses L-glutamyl-tRNA(Gln) + L-glutamine + ATP + H2O = L-glutaminyl-tRNA(Gln) + L-glutamate + ADP + phosphate + H(+). In terms of biological role, allows the formation of correctly charged Gln-tRNA(Gln) through the transamidation of misacylated Glu-tRNA(Gln) in organisms which lack glutaminyl-tRNA synthetase. The reaction takes place in the presence of glutamine and ATP through an activated gamma-phospho-Glu-tRNA(Gln). This Agathobacter rectalis (strain ATCC 33656 / DSM 3377 / JCM 17463 / KCTC 5835 / VPI 0990) (Eubacterium rectale) protein is Glutamyl-tRNA(Gln) amidotransferase subunit A.